The chain runs to 558 residues: CTP synthase (558 aa).

The segment at 1–267 (MTKFVFVTGG…AQQTLELLNL (267 aa)) is amidoligase domain. Serine 13 is a binding site for CTP. Serine 13 is a UTP binding site. ATP-binding positions include 14 to 19 (SIGKGI) and aspartate 71. The Mg(2+) site is built by aspartate 71 and glutamate 141. CTP-binding positions include 148-150 (DIE), 188-193 (KTKPTQ), and lysine 224. Residues 188–193 (KTKPTQ) and lysine 224 each bind UTP. Residues 292-534 (EVALVGKYVQ…VKASVDYNHV (243 aa)) enclose the Glutamine amidotransferase type-1 domain. Glycine 354 is an L-glutamine binding site. The active-site Nucleophile; for glutamine hydrolysis is cysteine 381. L-glutamine is bound by residues 382 to 385 (MGMQ), glutamate 405, and arginine 462. Active-site residues include histidine 507 and glutamate 509.

Belongs to the CTP synthase family. As to quaternary structure, homotetramer.

The catalysed reaction is UTP + L-glutamine + ATP + H2O = CTP + L-glutamate + ADP + phosphate + 2 H(+). It carries out the reaction L-glutamine + H2O = L-glutamate + NH4(+). It catalyses the reaction UTP + NH4(+) + ATP = CTP + ADP + phosphate + 2 H(+). It functions in the pathway pyrimidine metabolism; CTP biosynthesis via de novo pathway; CTP from UDP: step 2/2. Its activity is regulated as follows. Allosterically activated by GTP, when glutamine is the substrate; GTP has no effect on the reaction when ammonia is the substrate. The allosteric effector GTP functions by stabilizing the protein conformation that binds the tetrahedral intermediate(s) formed during glutamine hydrolysis. Inhibited by the product CTP, via allosteric rather than competitive inhibition. Catalyzes the ATP-dependent amination of UTP to CTP with either L-glutamine or ammonia as the source of nitrogen. Regulates intracellular CTP levels through interactions with the four ribonucleotide triphosphates. The protein is CTP synthase of Gloeothece citriformis (strain PCC 7424) (Cyanothece sp. (strain PCC 7424)).